Reading from the N-terminus, the 180-residue chain is Large ribosomal subunit protein uL5 (180 aa).

Belongs to the universal ribosomal protein uL5 family. As to quaternary structure, part of the 50S ribosomal subunit; part of the 5S rRNA/L5/L18/L25 subcomplex. Contacts the 5S rRNA and the P site tRNA. Forms a bridge to the 30S subunit in the 70S ribosome.

Functionally, this is one of the proteins that bind and probably mediate the attachment of the 5S RNA into the large ribosomal subunit, where it forms part of the central protuberance. In the 70S ribosome it contacts protein S13 of the 30S subunit (bridge B1b), connecting the 2 subunits; this bridge is implicated in subunit movement. Contacts the P site tRNA; the 5S rRNA and some of its associated proteins might help stabilize positioning of ribosome-bound tRNAs. This is Large ribosomal subunit protein uL5 from Synechocystis sp. (strain ATCC 27184 / PCC 6803 / Kazusa).